A 218-amino-acid polypeptide reads, in one-letter code: ATP phosphoribosyltransferase (218 aa).

Belongs to the ATP phosphoribosyltransferase family. Short subfamily. In terms of assembly, heteromultimer composed of HisG and HisZ subunits.

It localises to the cytoplasm. It carries out the reaction 1-(5-phospho-beta-D-ribosyl)-ATP + diphosphate = 5-phospho-alpha-D-ribose 1-diphosphate + ATP. It functions in the pathway amino-acid biosynthesis; L-histidine biosynthesis; L-histidine from 5-phospho-alpha-D-ribose 1-diphosphate: step 1/9. Its function is as follows. Catalyzes the condensation of ATP and 5-phosphoribose 1-diphosphate to form N'-(5'-phosphoribosyl)-ATP (PR-ATP). Has a crucial role in the pathway because the rate of histidine biosynthesis seems to be controlled primarily by regulation of HisG enzymatic activity. In Acaryochloris marina (strain MBIC 11017), this protein is ATP phosphoribosyltransferase.